Consider the following 1275-residue polypeptide: Serine/threonine-protein kinase ULK4 (1275 aa).

The Protein kinase domain occupies 4-280; the sequence is FILYEEIGRG…WTRLLQHSFW (277 aa). 2 disordered regions span residues 299 to 350 and 364 to 392; these read SRNT…KSTL and RPTP…TSPL. Residues 336–348 show a composition bias toward basic and acidic residues; sequence FRLENPTEFRPKS. The segment covering 364–373 has biased composition (polar residues); it reads RPTPRTSTAV. 5 HEAT repeats span residues 842–880, 926–964, 1025–1063, 1151–1189, and 1213–1253; these read LKLC…ILSH, STVV…LLVN, LVEE…NLVA, NRPL…LYGG, and PKEQ…LAPG.

This sequence belongs to the protein kinase superfamily. Ser/Thr protein kinase family. APG1/unc-51/ULK1 subfamily. Expressed in the brain, mainly in postmitotic neurons, including GABAergic neurons, but not in astrocytes (at protein level).

It carries out the reaction L-seryl-[protein] + ATP = O-phospho-L-seryl-[protein] + ADP + H(+). The enzyme catalyses L-threonyl-[protein] + ATP = O-phospho-L-threonyl-[protein] + ADP + H(+). Its function is as follows. May be involved in the remodeling of cytoskeletal components, such as alpha-tubulin, and in this way regulates neurite branching and elongation, as well as cell motility. This chain is Serine/threonine-protein kinase ULK4 (ULK4), found in Homo sapiens (Human).